The primary structure comprises 279 residues: 3-methyl-2-oxobutanoate hydroxymethyltransferase (279 aa).

Mg(2+)-binding residues include D43 and D82. 3-methyl-2-oxobutanoate contacts are provided by residues 43–44 (DS), D82, and K112. Mg(2+) is bound at residue E114. E181 (proton acceptor) is an active-site residue.

It belongs to the PanB family. Homodecamer; pentamer of dimers. The cofactor is Mg(2+).

It localises to the cytoplasm. The enzyme catalyses 3-methyl-2-oxobutanoate + (6R)-5,10-methylene-5,6,7,8-tetrahydrofolate + H2O = 2-dehydropantoate + (6S)-5,6,7,8-tetrahydrofolate. It participates in cofactor biosynthesis; (R)-pantothenate biosynthesis; (R)-pantoate from 3-methyl-2-oxobutanoate: step 1/2. Its function is as follows. Catalyzes the reversible reaction in which hydroxymethyl group from 5,10-methylenetetrahydrofolate is transferred onto alpha-ketoisovalerate to form ketopantoate. The protein is 3-methyl-2-oxobutanoate hydroxymethyltransferase of Geobacillus kaustophilus (strain HTA426).